The following is a 397-amino-acid chain: Elongation factor Tu (397 aa).

A tr-type G domain is found at 10-206 (KPHVNIGTIG…AVDESIPDPV (197 aa)). Residues 19-26 (GHVDHGKT) are G1. 19–26 (GHVDHGKT) contributes to the GTP binding site. A Mg(2+)-binding site is contributed by Thr26. The G2 stretch occupies residues 62–66 (GITIN). Residues 83-86 (DAPG) are G3. Residues 83-87 (DAPGH) and 138-141 (NKSD) each bind GTP. A G4 region spans residues 138–141 (NKSD). The segment at 176-178 (SAL) is G5.

The protein belongs to the TRAFAC class translation factor GTPase superfamily. Classic translation factor GTPase family. EF-Tu/EF-1A subfamily. In terms of assembly, monomer.

Its subcellular location is the cytoplasm. The catalysed reaction is GTP + H2O = GDP + phosphate + H(+). GTP hydrolase that promotes the GTP-dependent binding of aminoacyl-tRNA to the A-site of ribosomes during protein biosynthesis. The chain is Elongation factor Tu from Mycobacteroides abscessus (strain ATCC 19977 / DSM 44196 / CCUG 20993 / CIP 104536 / JCM 13569 / NCTC 13031 / TMC 1543 / L948) (Mycobacterium abscessus).